The primary structure comprises 121 residues: Small ribosomal subunit protein bS21m (121 aa).

The transit peptide at 1 to 14 (MNSSYFPGVLGVRW) directs the protein to the mitochondrion.

Belongs to the bacterial ribosomal protein bS21 family. Component of the mitochondrial small ribosomal subunit (mt-SSU). Mature yeast 74S mitochondrial ribosomes consist of a small (37S) and a large (54S) subunit. The 37S small subunit contains a 15S ribosomal RNA (15S mt-rRNA) and at least 32 different proteins. The 54S large subunit contains a 21S rRNA (21S mt-rRNA) and at least 45 different proteins.

It is found in the mitochondrion. Functionally, component of the mitochondrial ribosome (mitoribosome), a dedicated translation machinery responsible for the synthesis of mitochondrial genome-encoded proteins, including at least some of the essential transmembrane subunits of the mitochondrial respiratory chain. The mitoribosomes are attached to the mitochondrial inner membrane and translation products are cotranslationally integrated into the membrane. This is Small ribosomal subunit protein bS21m (mrp21) from Schizosaccharomyces pombe (strain 972 / ATCC 24843) (Fission yeast).